Reading from the N-terminus, the 420-residue chain is MTDSRKNKRPRKSILRPVTGPNALHLSDIFRNETTGGMLMLAATVAALLWANLGHHSYHFFRELALGPLTIEQWAADGLLTVFFFIAGLELKREFVEGSLSRPADALVPIVAAVCGMVFPAGIYTLFNVLASDGHPAGWAIPMATDIAFALAVLAIVGAGLPQAVRAFLLTLAIADDLGSIIVIAVFFSTGLDIWWLAGAIACIGLWGVMQHFHVDNGWWYVPIFIVGWWCMLRSGVHATIAGVAFGLLTRTEEDVLDDPVDRWQHKVEPWSAGVVVPFFALMSAGVHVSGKTFLALWTHPISLGIVCGLILGKVIGITLGSCLTARFTSAELGRGVVWRDIIAVAVLAGIGFTVSMLMTDLSFPKNHEFADEAKASVLMASFLAAILGGAMLHHRGKSHAMRQTKHSHEVPVAAGTCND.

The next 10 membrane-spanning stretches (helical) occupy residues 34 to 54 (TTGGMLMLAATVAALLWANLG), 69 to 89 (LTIEQWAADGLLTVFFFIAGL), 107 to 127 (LVPIVAAVCGMVFPAGIYTLF), 141 to 161 (IPMATDIAFALAVLAIVGAGL), 168 to 190 (FLLTLAIADDLGSIIVIAVFFST), 194 to 213 (IWWLAGAIACIGLWGVMQHF), 271 to 291 (WSAGVVVPFFALMSAGVHVSG), 301 to 321 (PISLGIVCGLILGKVIGITLG), 342 to 362 (IIAVAVLAGIGFTVSMLMTDL), and 374 to 394 (AKASVLMASFLAAILGGAMLH).

It belongs to the NhaA Na(+)/H(+) (TC 2.A.33) antiporter family.

It localises to the cell membrane. It carries out the reaction Na(+)(in) + 2 H(+)(out) = Na(+)(out) + 2 H(+)(in). Its function is as follows. Na(+)/H(+) antiporter that extrudes sodium in exchange for external protons. In Cutibacterium acnes (strain DSM 16379 / KPA171202) (Propionibacterium acnes), this protein is Na(+)/H(+) antiporter NhaA.